Here is a 240-residue protein sequence, read N- to C-terminus: NKG2-E type II integral membrane protein (240 aa).

Residues 1 to 12 (MSKQRGTFSEVS) show a composition bias toward polar residues. Residues 1 to 31 (MSKQRGTFSEVSLAQDPKWQQRKPKGNKSSI) are disordered. At 1–70 (MSKQRGTFSE…CQGLLPPPEK (70 aa)) the chain is on the cytoplasmic side. The helical; Signal-anchor for type II membrane protein transmembrane segment at 71–93 (LTAEVLGIICIVLMATVLKTIVL) threads the bilayer. Residues 94 to 240 (IPFLEQNNSS…IMLTRLVLNS (147 aa)) are Extracellular-facing. Residue asparagine 100 is glycosylated (N-linked (GlcNAc...) asparagine). Positions 116–230 (HCPEEWITYS…GSSRIIRRGF (115 aa)) constitute a C-type lectin domain. Cysteine 117 and cysteine 128 are oxidised to a cystine. Residues asparagine 149 and asparagine 179 are each glycosylated (N-linked (GlcNAc...) asparagine). A disulfide bridge connects residues cysteine 207 and cysteine 220.

Can form disulfide-bonded heterodimer with CD94. In terms of tissue distribution, natural killer cells.

The protein localises to the membrane. Plays a role as a receptor for the recognition of MHC class I HLA-E molecules by NK cells and some cytotoxic T-cells. This Homo sapiens (Human) protein is NKG2-E type II integral membrane protein (KLRC3).